The primary structure comprises 462 residues: B3 domain-containing protein REM8 (462 aa).

3 consecutive DNA-binding regions (TF-B3) follow at residues 11–103 (NKHF…LGPS), 148–243 (CFSQ…LCSR), and 249–346 (FVKL…FSKI). The interval 351–419 (FEAEDRRHKR…NLQKTQACSV (69 aa)) is disordered. Positions 369-397 (ETDKGEPSRATKMGPELEKREKTAEKGEP) are enriched in basic and acidic residues. Residues 399–418 (RASNKSSGKQGNLQKTQACS) are compositionally biased toward polar residues.

It localises to the nucleus. In Arabidopsis thaliana (Mouse-ear cress), this protein is B3 domain-containing protein REM8 (REM8).